We begin with the raw amino-acid sequence, 221 residues long: ATP-dependent dethiobiotin synthetase BioD (221 aa).

13–18 (DIGKTY) contacts ATP. Thr-17 contributes to the Mg(2+) binding site. Lys-38 is an active-site residue. Ser-42 serves as a coordination point for substrate. ATP contacts are provided by residues Asp-51, 112–115 (EGSG), and 176–177 (NR). Mg(2+) is bound by residues Asp-51 and Glu-112.

It belongs to the dethiobiotin synthetase family. In terms of assembly, homodimer. The cofactor is Mg(2+).

The protein resides in the cytoplasm. The enzyme catalyses (7R,8S)-7,8-diammoniononanoate + CO2 + ATP = (4R,5S)-dethiobiotin + ADP + phosphate + 3 H(+). It functions in the pathway cofactor biosynthesis; biotin biosynthesis; biotin from 7,8-diaminononanoate: step 1/2. Catalyzes a mechanistically unusual reaction, the ATP-dependent insertion of CO2 between the N7 and N8 nitrogen atoms of 7,8-diaminopelargonic acid (DAPA, also called 7,8-diammoniononanoate) to form a ureido ring. In Brachyspira hyodysenteriae (strain ATCC 49526 / WA1), this protein is ATP-dependent dethiobiotin synthetase BioD.